The primary structure comprises 257 residues: Hydroxyacylglutathione hydrolase (257 aa).

Zn(2+) is bound by residues His54, His56, Asp58, His59, His113, Asp137, and His175.

The protein belongs to the metallo-beta-lactamase superfamily. Glyoxalase II family. In terms of assembly, monomer. The cofactor is Zn(2+).

The catalysed reaction is an S-(2-hydroxyacyl)glutathione + H2O = a 2-hydroxy carboxylate + glutathione + H(+). The protein operates within secondary metabolite metabolism; methylglyoxal degradation; (R)-lactate from methylglyoxal: step 2/2. Thiolesterase that catalyzes the hydrolysis of S-D-lactoyl-glutathione to form glutathione and D-lactic acid. In Synechocystis sp. (strain ATCC 27184 / PCC 6803 / Kazusa), this protein is Hydroxyacylglutathione hydrolase.